A 157-amino-acid chain; its full sequence is Phosphopantetheine adenylyltransferase (157 aa).

Substrate is bound at residue serine 9. ATP contacts are provided by residues 9-10 (SF) and histidine 17. Positions 41, 73, and 87 each coordinate substrate. ATP contacts are provided by residues 88-90 (GLR), glutamate 98, and 122-128 (YSFVSSS).

The protein belongs to the bacterial CoaD family. Homohexamer. The cofactor is Mg(2+).

The protein localises to the cytoplasm. The catalysed reaction is (R)-4'-phosphopantetheine + ATP + H(+) = 3'-dephospho-CoA + diphosphate. The protein operates within cofactor biosynthesis; coenzyme A biosynthesis; CoA from (R)-pantothenate: step 4/5. Functionally, reversibly transfers an adenylyl group from ATP to 4'-phosphopantetheine, yielding dephospho-CoA (dPCoA) and pyrophosphate. The chain is Phosphopantetheine adenylyltransferase from Mycobacterium marinum (strain ATCC BAA-535 / M).